Here is a 331-residue protein sequence, read N- to C-terminus: MKQTVYTASPESQQIHVWRLNTEGSLTLVQVVDVPGQVQPMVVSPDKRFLYVGVRPEFRVLAYRISPDDGALTFAAEAPLPGSPTHISTDRQGRFIFSGSYNAGSVSVTRLEDGIPVETVDIVEGLEGCHSANISPDNRTLWVPALKQDRICLFTLSDDGHLQAQNPAEVTTVEGAGPRHMVFHPNQQYAYVVNELNSSVDVWELHNPNGQIECIQTLDIMPADFADTRWAADIHITPDGRHLYACDRTSSLITVFSISEDGSVLAIEGFQPTETQPRGFNIDNSGKFLIAAGQKSHHIALYEIKGVQGLLEEKGRYAVGQGPMWVVVNAH.

This sequence belongs to the cycloisomerase 2 family.

It carries out the reaction 6-phospho-D-glucono-1,5-lactone + H2O = 6-phospho-D-gluconate + H(+). Its pathway is carbohydrate degradation; pentose phosphate pathway; D-ribulose 5-phosphate from D-glucose 6-phosphate (oxidative stage): step 2/3. In terms of biological role, catalyzes the hydrolysis of 6-phosphogluconolactone to 6-phosphogluconate. This Enterobacter sp. (strain 638) protein is 6-phosphogluconolactonase.